A 73-amino-acid polypeptide reads, in one-letter code: Large ribosomal subunit protein bL31 (73 aa).

This sequence belongs to the bacterial ribosomal protein bL31 family. Type A subfamily. As to quaternary structure, part of the 50S ribosomal subunit.

In terms of biological role, binds the 23S rRNA. The chain is Large ribosomal subunit protein bL31 from Bartonella bacilliformis (strain ATCC 35685 / KC583 / Herrer 020/F12,63).